The sequence spans 54 residues: Protein GndA (54 aa).

A helical membrane pass occupies residues 28–50 (LFVVIVSFQQRALTSSVPVFLAV).

The protein localises to the cell inner membrane. The polypeptide is Protein GndA (Escherichia coli (strain K12)).